The primary structure comprises 30 residues: Ampulexin 3 (30 aa).

The signal sequence occupies residues 1-17 (MKAIMVLFYVMTLTIIG).

In terms of assembly, monomer. Expressed in venom sac and, to a lesser extent, in venom gland. Not expressed in brain.

It is found in the secreted. The polypeptide is Ampulexin 3 (Ampulex compressa (Emerald cockroach wasp)).